Consider the following 327-residue polypeptide: Phenylalanine--tRNA ligase alpha subunit (327 aa).

Position 252 (Glu252) interacts with Mg(2+).

Belongs to the class-II aminoacyl-tRNA synthetase family. Phe-tRNA synthetase alpha subunit type 1 subfamily. Tetramer of two alpha and two beta subunits. Mg(2+) is required as a cofactor.

The protein localises to the cytoplasm. The enzyme catalyses tRNA(Phe) + L-phenylalanine + ATP = L-phenylalanyl-tRNA(Phe) + AMP + diphosphate + H(+). This Shewanella sp. (strain MR-7) protein is Phenylalanine--tRNA ligase alpha subunit.